Here is a 122-residue protein sequence, read N- to C-terminus: Large ribosomal subunit protein uL14 (122 aa).

This sequence belongs to the universal ribosomal protein uL14 family. As to quaternary structure, part of the 50S ribosomal subunit. Forms a cluster with proteins L3 and L19. In the 70S ribosome, L14 and L19 interact and together make contacts with the 16S rRNA in bridges B5 and B8.

Functionally, binds to 23S rRNA. Forms part of two intersubunit bridges in the 70S ribosome. This Pseudomonas fluorescens (strain ATCC BAA-477 / NRRL B-23932 / Pf-5) protein is Large ribosomal subunit protein uL14.